A 598-amino-acid chain; its full sequence is Biotin-dependent acyl-coenzyme A carboxylase alpha3 subunit (598 aa).

One can recognise a Biotin carboxylation domain in the interval 8–452; that stretch reads RIAKVLVANR…SFSVHTRWIE (445 aa). An ATP-grasp domain is found at 127–324; it reads RHIAARAQAP…LVLQQFKIAN (198 aa). Residue 155–216 participates in ATP binding; the sequence is AKEHGVPIAI…ERYLDKPRHV (62 aa). Positions 282, 295, and 297 each coordinate Mg(2+). Mn(2+) contacts are provided by Glu-282, Glu-295, and Asn-297. Positions 506–531 are disordered; the sequence is PAGVIRKKPKPRKRGGHTGAATSGDA. Residues 510–521 are compositionally biased toward basic residues; it reads IRKKPKPRKRGG. Residues 522-598 enclose the Biotinyl-binding domain; sequence HTGAATSGDA…TQGTVLAEIK (77 aa). Position 564 is an N6-biotinyllysine (Lys-564).

As to quaternary structure, the biotin-dependent acyl-CoA carboxylase complex is composed of AccA3, which contains the biotin carboxylase (BC) and biotin carboxyl carrier protein (BCCP) domains, and an AccD protein, which contains the carboxyl transferase (CT) domain. The cofactor is Mg(2+). Mn(2+) is required as a cofactor. It depends on biotin as a cofactor.

It catalyses the reaction N(6)-biotinyl-L-lysyl-[protein] + hydrogencarbonate + ATP = N(6)-carboxybiotinyl-L-lysyl-[protein] + ADP + phosphate + H(+). The protein operates within lipid metabolism; fatty acid biosynthesis. It participates in lipid metabolism; mycolic acid biosynthesis. Component of a biotin-dependent acyl-CoA carboxylase complex. This subunit catalyzes the ATP-dependent carboxylation of the biotin carried by the biotin carboxyl carrier (BCC) domain, resulting in the formation of carboxyl biotin. This is Biotin-dependent acyl-coenzyme A carboxylase alpha3 subunit (bccA) from Mycobacterium leprae (strain TN).